A 153-amino-acid polypeptide reads, in one-letter code: MGLTSQLLPPLFFLLACAGNFVHGHKCDITLQEIIKTLNSLTEQKTLCTELTVTDIFAASKNTTEKETFCRAATVLRQFYSHHEKDTRCLGATAQQFHRHKQLIRFLKRLDRNLWGLAGLNSCPVKEANQSTLENFLERLKTIMREKYSKCSS.

The signal sequence occupies residues 1-24 (MGLTSQLLPPLFFLLACAGNFVHG). 3 cysteine pairs are disulfide-bonded: C27–C151, C48–C89, and C70–C123. The N-linked (GlcNAc...) asparagine glycan is linked to N62.

This sequence belongs to the IL-4/IL-13 family. Interacts with IL4R. Interacts with IL13RA1.

The protein resides in the secreted. Its function is as follows. Cytokine secreted primarily by mast cells, T-cells, eosinophils, and basophils that plays a role in regulating antibody production, hematopoiesis and inflammation, and the development of effector T-cell responses. Induces the expression of class II MHC molecules on resting B-cells. Enhances both secretion and cell surface expression of IgE and IgG1. Also regulates the expression of the low affinity Fc receptor for IgE (CD23) on both lymphocytes and monocytes. Positively regulates IL31RA expression in macrophages. Stimulates autophagy in dendritic cells by interfering with mTORC1 signaling and through the induction of RUFY4. In addition, plays a critical role in higher functions of the normal brain, such as memory and learning. Upon binding to IL4, IL4R receptor dimerizes either with the common IL2R gamma chain/IL2RG to produce the type 1 signaling complex, located mainly on hematopoietic cells, or with the IL13RA1 to produce the type 2 complex, which is also expressed on nonhematopoietic cells. Engagement of both types of receptors initiates JAK3 and to a lower extend JAK1 phosphorylation leading to activation of the signal transducer and activator of transcription 6/STAT6. The polypeptide is Interleukin-4 (IL4) (Homo sapiens (Human)).